Here is a 498-residue protein sequence, read N- to C-terminus: MDFSVKVDIEKEVTCPICLELLTEPLSLDCGHSFCQACITAKIKESVIISRGESSCPVCQTRFQPGNLRPNRHLANIVERVKEVKMSPQEGQKRDVCEHHGKKLQIFCKEDGKVICWVCELSQEHQGHQTFRINEVVKECQEKLQVALQRLIKEDQEAEKLEDDIRQERTAWKNYIQIERQKILKGFNEMRVILDNEEQRELQKLEEGEVNVLDNLAAATDQLVQQRQDASTLISDLQRRLRGSSVEMLQDVIDVMKRSESWTLKKPKSVSKKLKSVFRVPDLSGMLQVLKELTDVQYYWVDVMLNPGSATSNVAISVDQRQVKTVRTCTFKNSNPCDFSAFGVFGCQYFSSGKYYWEVDVSGKIAWILGVHSKISSLNKRKSSGFAFDPSVNYSKVYSRYRPQYGYWVIGLQNTCEYNAFEDSSSSDPKVLTLFMAVPPCRIGVFLDYEAGIVSFFNVTNHGALIYKFSGCRFSRPAYPYFNPWNCLVPMTVCPPSS.

The RING-type zinc finger occupies 15–60 (CPICLELLTEPLSLDCGHSFCQACITAKIKESVIISRGESSCPVCQ). The segment at 92–133 (QKRDVCEHHGKKLQIFCKEDGKVICWVCELSQEHQGHQTFRI) adopts a B box-type zinc-finger fold. Cys97, His100, Cys119, and His125 together coordinate Zn(2+). Residues 132–248 (RINEVVKECQ…RRLRGSSVEM (117 aa)) are a coiled coil. The Nuclear localization signal signature appears at 257–275 (KRSESWTLKKPKSVSKKLK). The 216-residue stretch at 283–498 (LSGMLQVLKE…VPMTVCPPSS (216 aa)) folds into the B30.2/SPRY domain.

It belongs to the TRIM/RBCC family. As to quaternary structure, homotrimer. (Microbial infection) Interacts with HIV-1 Gag polyprotein; this interaction seems to reduce gag production or virus budding. In terms of assembly, (Microbial infection) Interacts with EMCV protease 3C; this interaction leads to viral protease ubiquitination. Post-translationally, auto-ubiquitinated. Strongly expressed in peripheral blood leukocytes, spleen, thymus, and ovary. Expressed at basal levels in other tissues.

It is found in the cytoplasm. The protein resides in the nucleus. The protein localises to the nucleus speckle. It localises to the cajal body. The enzyme catalyses S-ubiquitinyl-[E2 ubiquitin-conjugating enzyme]-L-cysteine + [acceptor protein]-L-lysine = [E2 ubiquitin-conjugating enzyme]-L-cysteine + N(6)-ubiquitinyl-[acceptor protein]-L-lysine.. Its pathway is protein modification; protein ubiquitination. Its function is as follows. Interferon-induced E3 ubiquitin ligase that plays important roles in innate and adaptive immunity. Restricts the replication of many viruses including HIV-1, encephalomyocarditis virus (EMCV), hepatitis B virus (HBV), hepatitis C virus (HCV) or Zika virus (ZIKV). Mechanistically, negatively regulates HCV replication by promoting ubiquitination and subsequent degradation of viral NS5A. Also acts by promoting the degradation of Zika virus NS1 and NS3 proteins through proteasomal degradation. Acts as a suppressor of basal HIV-1 LTR-driven transcription by preventing Sp1 binding to the HIV-1 promoter. Also plays a role in antiviral immunity by co-regulating together with NT5C2 the RIGI/NF-kappa-B pathway by promoting 'Lys-63'-linked ubiquitination of RIGI, while NT5C2 is responsible for 'Lys-48'-linked ubiquitination of RIGI. Participates in adaptive immunity by suppressing the amount of MHC class II protein in a negative feedback manner in order to limit the extent of MHC class II induction. In Homo sapiens (Human), this protein is E3 ubiquitin-protein ligase TRIM22 (TRIM22).